We begin with the raw amino-acid sequence, 351 residues long: Methionine import ATP-binding protein MetN (351 aa).

An ABC transporter domain is found at 2–241; that stretch reads IELRNVTKTY…PKTEIAKKFT (240 aa). 38–45 serves as a coordination point for ATP; it reads GKSGAGKS.

This sequence belongs to the ABC transporter superfamily. Methionine importer (TC 3.A.1.24) family. As to quaternary structure, the complex is composed of two ATP-binding proteins (MetN), two transmembrane proteins (MetI) and a solute-binding protein (MetQ).

It localises to the cell inner membrane. The enzyme catalyses L-methionine(out) + ATP + H2O = L-methionine(in) + ADP + phosphate + H(+). It carries out the reaction D-methionine(out) + ATP + H2O = D-methionine(in) + ADP + phosphate + H(+). Part of the ABC transporter complex MetNIQ involved in methionine import. Responsible for energy coupling to the transport system. This is Methionine import ATP-binding protein MetN from Coxiella burnetii (strain RSA 493 / Nine Mile phase I).